The sequence spans 633 residues: MATEISARGRPRAIGQEEYNLYSSLSEDELVQMAIEQSLADKTRGPTTTETTVPTRVNREPAHFYPWTRSSVSPESALTSAPKGLFQEVMQKYNRSKSSQLAPVDPVLKAIKEDDEEALTAMIKAGKNLSEPNKEGWLPLHEAAYYGQLNCLKALHRAYPAVIDQRTLQEETALYLATCRGHVDCLQFLLQAGAEPDISNKSRETPLYKACERKNVEAVRILVQYKADTNHRCNRGWTALHESVARNDLEVMEILVSGGAKVEAKNAYGITPLFVAAQSGQLEALRFLAKYGADINTQASDSASALYEACKNGHEEVVEFLLSQGADANKTNKDGMLPLHIASKKGNYRIVQMLLPVTSRTRVRRSGISPLHLAAERNNDEVLEALLGARFDVNAPLAPERARLYEDRRSSALYFAVVNNNVYATELLLLAGADPNRDVINPLLVAIRHGCLRTMQLLLDHGANIDAYIATHPTAFPATIMFAMKCLSLLKFLMDLGCNGEPCFSCLYGNGPHPPAPPPSNRFNDAPASDKAPSAVQFCEFLSAPEVSRWAGPIIDVLLDYVGNVQLCSRLKEHIDSFEDWAVIKEKAEPPRPLAHLCRLRVRKAIGKYRIKLLDTLPLPGRLIRYLKYENTQ.

The UIM domain occupies 26-45; that stretch reads SEDELVQMAIEQSLADKTRG. ANK repeat units follow at residues 102–131, 135–165, 169–198, 202–231, 235–264, 268–297, 301–330, 334–363, 366–395, 408–437, 438–467, and 474–502; these read APVDPVLKAIKEDDEEALTAMIKAGKNLSE, EGWLPLHEAAYYGQLNCLKALHRAYPAVIDQ, QEETALYLATCRGHVDCLQFLLQAGAEPDI, SRETPLYKACERKNVEAVRILVQYKADTNH, RGWTALHESVARNDLEVMEILVSGGAKVEA, YGITPLFVAAQSGQLEALRFLAKYGADINT, DSASALYEACKNGHEEVVEFLLSQGADANK, DGMLPLHIASKKGNYRIVQMLLPVTSRTRV, SGISPLHLAAERNNDEVLEALLGARFDVNA, RRSSALYFAVVNNNVYATELLLLAGADPNR, DVINPLLVAIRHGCLRTMQLLLDHGANIDA, and TAFPATIMFAMKCLSLLKFLMDLGCNGEP. Serine 369 bears the Phosphoserine mark. In terms of domain architecture, SOCS box spans 579–633; that stretch reads EDWAVIKEKAEPPRPLAHLCRLRVRKAIGKYRIKLLDTLPLPGRLIRYLKYENTQ.

Belongs to the ankyrin SOCS box (ASB) family. In terms of assembly, component of a probable ECS E3 ubiquitin-protein ligase complex which contains CUL5, either RBX1 or RNF7/RBX2, Elongin BC complex (ELOB and ELOC) and ASB2. Interacts with SKP2. Through its interaction with SKP2, likely to bridge the formation of dimeric E3-ubiquitin-protein ligase complexes composed of an ECS complex and an SCF(SKP2) complex. Interacts with JAK2; the interaction targets JAK2 for Notch-mediated proteasomal degradation. Interacts with TCF3/E2A; the interaction is mediated by SKP2 and targets TCF3 for Notch-mediated proteasomal degradation. Interacts with DES. Post-translationally, monoubiquitinated.

It localises to the cytoplasm. Its subcellular location is the cytoskeleton. The protein resides in the stress fiber. It is found in the myofibril. The protein localises to the sarcomere. It localises to the z line. Its pathway is protein modification; protein ubiquitination. Substrate-recognition component of a SCF-like ECS (Elongin-Cullin-SOCS-box protein) E3 ubiquitin-protein ligase complex which mediates the ubiquitination and subsequent proteasomal degradation of target proteins. Mediates Notch-induced ubiquitination and degradation of substrates including E2A and JAK2. Required during embryonic heart development for complete heart looping. Required for cardiomyocyte differentiation. Involved in myogenic differentiation and targets filamin FLNB for proteasomal degradation but not filamin FLNA. Also targets DES for proteasomal degradation. Acts as a negative regulator of skeletal muscle mass. The chain is Ankyrin repeat and SOCS box protein 2 from Bos taurus (Bovine).